We begin with the raw amino-acid sequence, 417 residues long: Serine hydroxymethyltransferase (417 aa).

Residues Leu-121 and 125–127 (GHL) contribute to the (6S)-5,6,7,8-tetrahydrofolate site. The residue at position 229 (Lys-229) is an N6-(pyridoxal phosphate)lysine. 355–357 (SSF) is a (6S)-5,6,7,8-tetrahydrofolate binding site.

The protein belongs to the SHMT family. Homodimer. The cofactor is pyridoxal 5'-phosphate.

It is found in the cytoplasm. The catalysed reaction is (6R)-5,10-methylene-5,6,7,8-tetrahydrofolate + glycine + H2O = (6S)-5,6,7,8-tetrahydrofolate + L-serine. It functions in the pathway one-carbon metabolism; tetrahydrofolate interconversion. Its pathway is amino-acid biosynthesis; glycine biosynthesis; glycine from L-serine: step 1/1. Catalyzes the reversible interconversion of serine and glycine with tetrahydrofolate (THF) serving as the one-carbon carrier. This reaction serves as the major source of one-carbon groups required for the biosynthesis of purines, thymidylate, methionine, and other important biomolecules. Also exhibits THF-independent aldolase activity toward beta-hydroxyamino acids, producing glycine and aldehydes, via a retro-aldol mechanism. This Baumannia cicadellinicola subsp. Homalodisca coagulata protein is Serine hydroxymethyltransferase.